The sequence spans 359 residues: Fructose-1,6-bisphosphatase class 1 (359 aa).

Residues Glu-95, Asp-117, Leu-119, and Asp-120 each contribute to the Mg(2+) site. Substrate-binding positions include 120 to 123 and Asn-212; that span reads DGSS. Glu-284 provides a ligand contact to Mg(2+).

It belongs to the FBPase class 1 family. In terms of assembly, homotetramer. Mg(2+) serves as cofactor.

It is found in the cytoplasm. The catalysed reaction is beta-D-fructose 1,6-bisphosphate + H2O = beta-D-fructose 6-phosphate + phosphate. The protein operates within carbohydrate biosynthesis; gluconeogenesis. The polypeptide is Fructose-1,6-bisphosphatase class 1 (Hydrogenophilus thermoluteolus (Pseudomonas hydrogenothermophila)).